A 223-amino-acid chain; its full sequence is 23 kDa piroplasm membrane protein (223 aa).

The first 19 residues, 1–19 (MHKFTKVFFVAILVHTLKS), serve as a signal peptide directing secretion. Residues 20–197 (GLVFTPVSGT…EEEKSDKKKY (178 aa)) are Extracellular-facing. The N-linked (GlcNAc...) asparagine glycan is linked to Asn69. The helical transmembrane segment at 198-218 (VLMVVVVVVFVVVASLVVFLV) threads the bilayer. The Cytoplasmic segment spans residues 219–223 (KFCLK).

The protein localises to the membrane. In Theileria buffeli, this protein is 23 kDa piroplasm membrane protein.